The sequence spans 393 residues: Cyclin CCL1 (393 aa).

Polar residues predominate over residues 1-19 (MTDIQLNGKSTLDTPSATM). Disordered regions lie at residues 1–45 (MTDI…RISD) and 289–325 (SREG…SEEY). 2 stretches are compositionally biased toward basic and acidic residues: residues 21–35 (AKEK…DENN) and 300–321 (NEKE…KSTE).

It belongs to the cyclin family. Cyclin C subfamily. CCL1 and KIN28 form the TFIIK complex, a component of TFIIH holo complex. Component of a complex consisting of KIN28, CCL1 and TFB3.

Functionally, regulatory component of the TFIIK complex (KIN28-CCL1 dimer) which is the protein kinase component of transcription factor IIH (TFIIH) and phosphorylates the C-terminal domain of RNA polymerase II during transition from transcription to elongation after preinitiation complex (PIC) formation, thereby positively regulating transcription. TFIIH (or factor B) is essential for both basal and activated transcription, and is involved in nucleotide excision repair (NER) of damaged DNA. TFIIH has DNA-dependent ATPase activity and is essential for polymerase II transcription in vitro. This is Cyclin CCL1 (CCL1) from Saccharomyces cerevisiae (strain ATCC 204508 / S288c) (Baker's yeast).